A 541-amino-acid polypeptide reads, in one-letter code: Eukaryotic translation initiation factor 3 subunit D-1 (541 aa).

Residues 98–136 (VQKPPHQRGRFRNMRGRGGRGRNPRGGLNNHHHHGMTTL) form a disordered region. Residues 100–120 (KPPHQRGRFRNMRGRGGRGRN) show a composition bias toward basic residues.

It belongs to the eIF-3 subunit D family. Component of the eukaryotic translation initiation factor 3 (eIF-3) complex. The eIF-3 complex interacts with pix.

It is found in the cytoplasm. MRNA cap-binding component of the eukaryotic translation initiation factor 3 (eIF-3) complex, which is involved in protein synthesis of a specialized repertoire of mRNAs and, together with other initiation factors, stimulates binding of mRNA and methionyl-tRNAi to the 40S ribosome. The eIF-3 complex specifically targets and initiates translation of a subset of mRNAs involved in cell proliferation. In the eIF-3 complex, eif3d specifically recognizes and binds the 7-methylguanosine cap of a subset of mRNAs. In Drosophila persimilis (Fruit fly), this protein is Eukaryotic translation initiation factor 3 subunit D-1.